Reading from the N-terminus, the 204-residue chain is Holliday junction branch migration complex subunit RuvA (204 aa).

A domain I region spans residues 1 to 67; the sequence is MIGYLEGKIL…QPKPVLIGFN (67 aa). A domain II region spans residues 68 to 145; that stretch reads SLEEREFFER…VFAGEHGGEP (78 aa). The interval 146–156 is flexible linker; the sequence is AGPAPVEENFH. Residues 156–204 form a domain III region; sequence HLLVLDVLVNQLGHKAAEAKELINQAIKRNPAISSPEELFDEVYRGETG.

This sequence belongs to the RuvA family. Homotetramer. Forms an RuvA(8)-RuvB(12)-Holliday junction (HJ) complex. HJ DNA is sandwiched between 2 RuvA tetramers; dsDNA enters through RuvA and exits via RuvB. An RuvB hexamer assembles on each DNA strand where it exits the tetramer. Each RuvB hexamer is contacted by two RuvA subunits (via domain III) on 2 adjacent RuvB subunits; this complex drives branch migration. In the full resolvosome a probable DNA-RuvA(4)-RuvB(12)-RuvC(2) complex forms which resolves the HJ.

Its subcellular location is the cytoplasm. Functionally, the RuvA-RuvB-RuvC complex processes Holliday junction (HJ) DNA during genetic recombination and DNA repair, while the RuvA-RuvB complex plays an important role in the rescue of blocked DNA replication forks via replication fork reversal (RFR). RuvA specifically binds to HJ cruciform DNA, conferring on it an open structure. The RuvB hexamer acts as an ATP-dependent pump, pulling dsDNA into and through the RuvAB complex. HJ branch migration allows RuvC to scan DNA until it finds its consensus sequence, where it cleaves and resolves the cruciform DNA. This Desulfatibacillum aliphaticivorans protein is Holliday junction branch migration complex subunit RuvA.